Here is a 418-residue protein sequence, read N- to C-terminus: Cobalt-zinc-cadmium resistance protein CzcC (418 aa).

Positions 1 to 22 (MRRLFLPLGLAVAFLSPNFAVA) are cleaved as a signal peptide.

This sequence belongs to the outer membrane factor (OMF) (TC 1.B.17) family.

Its subcellular location is the cell outer membrane. CzcC protein appears to modify the specificity of the system, perhaps by acting on the CzcB protein. When the CzcC protein is added to CzcA and CzcB, the efflux system gains specificity for cadmium and cobalt. The protein is Cobalt-zinc-cadmium resistance protein CzcC (czcC) of Cupriavidus metallidurans (strain ATCC 43123 / DSM 2839 / NBRC 102507 / CH34) (Ralstonia metallidurans).